Reading from the N-terminus, the 437-residue chain is Type II methyltransferase M.HgiCII (437 aa).

An SAM-dependent MTase C5-type domain is found at Phe-4–Glu-431. Residue Cys-75 is part of the active site.

It belongs to the class I-like SAM-binding methyltransferase superfamily. C5-methyltransferase family.

It carries out the reaction a 2'-deoxycytidine in DNA + S-adenosyl-L-methionine = a 5-methyl-2'-deoxycytidine in DNA + S-adenosyl-L-homocysteine + H(+). Its function is as follows. A methylase that recognizes the double-stranded sequence 5'-GGWCC-3', methylates C-? on both strands and protects the DNA from cleavage by the HgiCII endonuclease. In Herpetosiphon aurantiacus (Herpetosiphon giganteus), this protein is Type II methyltransferase M.HgiCII.